Here is a 515-residue protein sequence, read N- to C-terminus: Maturase K (515 aa).

Belongs to the intron maturase 2 family. MatK subfamily.

Its subcellular location is the plastid. The protein localises to the chloroplast. In terms of biological role, usually encoded in the trnK tRNA gene intron. Probably assists in splicing its own and other chloroplast group II introns. This Pinus roxburghii (Chir pine) protein is Maturase K.